The primary structure comprises 81 residues: Elongation factor 1-beta (81 aa).

The protein belongs to the EF-1-beta/EF-1-delta family.

Functionally, promotes the exchange of GDP for GTP in EF-1-alpha/GDP, thus allowing the regeneration of EF-1-alpha/GTP that could then be used to form the ternary complex EF-1-alpha/GTP/AAtRNA. In Nanoarchaeum equitans (strain Kin4-M), this protein is Elongation factor 1-beta.